Here is a 590-residue protein sequence, read N- to C-terminus: Pescadillo homolog (590 aa).

Residues 297-318 (AKADAGEEEEVEEEEEVEDDGL) are disordered. The span at 302-318 (GEEEEVEEEEEVEDDGL) shows a compositional bias: acidic residues. The region spanning 337–446 (TAGQLFSNFT…KLLPVSEYAP (110 aa)) is the BRCT domain. Residues 452–590 (AHLSPWGDAG…RKLNEKKEKR (139 aa)) are disordered. Over residues 471 to 499 (DASDDDEDDEDIEVAPEDYDKDDEEEEAE) the composition is skewed to acidic residues. Positions 489 to 589 (YDKDDEEEEA…RRKLNEKKEK (101 aa)) form a coiled coil. 3 stretches are compositionally biased toward basic and acidic residues: residues 500-517 (AEAK…KGTK), 532-547 (DKMT…DKKL), and 567-577 (NDKKSDREAEL).

It belongs to the pescadillo family. In terms of assembly, component of the NOP7 complex, composed of ERB1, NOP7 and YTM1. The complex is held together by ERB1, which interacts with NOP7 via its N-terminal domain and with YTM1 via a high-affinity interaction between the seven-bladed beta-propeller domains of the 2 proteins. The NOP7 complex associates with the 66S pre-ribosome.

It localises to the nucleus. The protein resides in the nucleolus. The protein localises to the nucleoplasm. Component of the NOP7 complex, which is required for maturation of the 25S and 5.8S ribosomal RNAs and formation of the 60S ribosome. The polypeptide is Pescadillo homolog (Yarrowia lipolytica (strain CLIB 122 / E 150) (Yeast)).